We begin with the raw amino-acid sequence, 96 residues long: DNA-directed RNA polymerase subunit Rpo11 (96 aa).

This sequence belongs to the archaeal Rpo11/eukaryotic RPB11/RPC19 RNA polymerase subunit family. In terms of assembly, part of the RNA polymerase complex.

It localises to the cytoplasm. It carries out the reaction RNA(n) + a ribonucleoside 5'-triphosphate = RNA(n+1) + diphosphate. In terms of biological role, DNA-dependent RNA polymerase (RNAP) catalyzes the transcription of DNA into RNA using the four ribonucleoside triphosphates as substrates. This is DNA-directed RNA polymerase subunit Rpo11 from Methanococcus maripaludis (strain C5 / ATCC BAA-1333).